Here is a 984-residue protein sequence, read N- to C-terminus: UPF0592 protein YDL073W (984 aa).

Residues Lys675–Ser712 are disordered. Acidic residues predominate over residues Gln687–Asp698.

The protein belongs to the UPF0592 family.

The sequence is that of UPF0592 protein YDL073W from Saccharomyces cerevisiae (strain ATCC 204508 / S288c) (Baker's yeast).